Here is a 103-residue protein sequence, read N- to C-terminus: Large ribosomal subunit protein uL24 (103 aa).

Belongs to the universal ribosomal protein uL24 family. In terms of assembly, part of the 50S ribosomal subunit.

Its function is as follows. One of two assembly initiator proteins, it binds directly to the 5'-end of the 23S rRNA, where it nucleates assembly of the 50S subunit. One of the proteins that surrounds the polypeptide exit tunnel on the outside of the subunit. This Synechococcus sp. (strain CC9311) protein is Large ribosomal subunit protein uL24.